A 339-amino-acid chain; its full sequence is MamK-like protein (339 aa).

Residues 18–19 (YS), Asp74, 162–164 (AWT), and 216–220 (KEQFA) each bind ATP.

The protein belongs to the FtsA/MreB family. MamK subfamily. In terms of assembly, forms cytoplasmic filament polymers. Forms filaments with MamK.

It localises to the cytoplasm. The protein resides in the cytoskeleton. It catalyses the reaction ATP + H2O = ADP + phosphate + H(+). Functionally, protein with ATPase activity which forms pole-to-pole filaments in vivo, probably with MamK. Efficient filament formation requires MamK. Probably promotes turnover of MamK filaments, by providing a monomer pool. In vivo, in the absence of its paralog MamK, forms thin filaments from pole to pole. In vitro forms straight filaments and bundles in the absence of ATP. Filament formation is triggered by KCl and MgCl(2); polymerizes more slowly and makes thinner filaments than MamK. Expression in E.coli yields a filament in the cell's longitudinal axis; the protein nucleates at one pole or the cell septum. The chain is MamK-like protein from Paramagnetospirillum magneticum (strain ATCC 700264 / AMB-1) (Magnetospirillum magneticum).